The chain runs to 259 residues: 3-dehydroquinate dehydratase (259 aa).

Residues 50-52 (EWR) and Arg86 contribute to the 3-dehydroquinate site. His147 (proton donor/acceptor) is an active-site residue. Residue Lys174 is the Schiff-base intermediate with substrate of the active site. 3-dehydroquinate-binding residues include Arg216, Ser235, and Gln239.

Belongs to the type-I 3-dehydroquinase family. Homodimer.

The enzyme catalyses 3-dehydroquinate = 3-dehydroshikimate + H2O. The protein operates within metabolic intermediate biosynthesis; chorismate biosynthesis; chorismate from D-erythrose 4-phosphate and phosphoenolpyruvate: step 3/7. Its function is as follows. Involved in the third step of the chorismate pathway, which leads to the biosynthesis of aromatic amino acids. Catalyzes the cis-dehydration of 3-dehydroquinate (DHQ) and introduces the first double bond of the aromatic ring to yield 3-dehydroshikimate. This is 3-dehydroquinate dehydratase from Geobacillus sp. (strain WCH70).